The following is a 256-amino-acid chain: Thiazole synthase (256 aa).

The active-site Schiff-base intermediate with DXP is K95. 1-deoxy-D-xylulose 5-phosphate contacts are provided by residues G156, A182–G183, and N204–T205.

This sequence belongs to the ThiG family. As to quaternary structure, homotetramer. Forms heterodimers with either ThiH or ThiS.

The protein resides in the cytoplasm. It carries out the reaction [ThiS sulfur-carrier protein]-C-terminal-Gly-aminoethanethioate + 2-iminoacetate + 1-deoxy-D-xylulose 5-phosphate = [ThiS sulfur-carrier protein]-C-terminal Gly-Gly + 2-[(2R,5Z)-2-carboxy-4-methylthiazol-5(2H)-ylidene]ethyl phosphate + 2 H2O + H(+). It functions in the pathway cofactor biosynthesis; thiamine diphosphate biosynthesis. Its function is as follows. Catalyzes the rearrangement of 1-deoxy-D-xylulose 5-phosphate (DXP) to produce the thiazole phosphate moiety of thiamine. Sulfur is provided by the thiocarboxylate moiety of the carrier protein ThiS. In vitro, sulfur can be provided by H(2)S. The sequence is that of Thiazole synthase from Escherichia fergusonii (strain ATCC 35469 / DSM 13698 / CCUG 18766 / IAM 14443 / JCM 21226 / LMG 7866 / NBRC 102419 / NCTC 12128 / CDC 0568-73).